Reading from the N-terminus, the 864-residue chain is N-alpha-acetyltransferase 16, NatA auxiliary subunit (864 aa).

TPR repeat units lie at residues 46-79, 80-113, 148-184, 224-257, 374-407, 409-441, and 485-518; these read GETLAMKGLTLNCLGKKEEAYEFVRKGLRNDVKS, HVCWHVYGLLQRSDKKYDEAIKCYRNALKLDKDN, RASWIGYAIAYHLLKDYDMALKLLEEFRQTQQVPPNK, LLVEEIKGEILLKLGRLKEASEVFKNLIDRNAEN, LWVQYFLAQHFDKLGQYSLALDYINAAIASTPTL, ELFYMKAKIYKHIGNLKEAAKWMDEAQSLDTAD, and MWFQTECISAYQRLGRYGDALKKCHEVERHFFEI. The disordered stretch occupies residues 603–638; that stretch reads QKKAKLEEERKHAERERQQKNQKKKRDEEEEEASGL. Basic and acidic residues predominate over residues 606-621; sequence AKLEEERKHAERERQQ.

In terms of assembly, component of the N-terminal acetyltransferase A (NatA) complex composed of NAA10 and NAA16.

In terms of biological role, auxillary subunit of the N-terminal acetyltransferase A (NatA) complex which displays alpha (N-terminal) acetyltransferase activity. In Homo sapiens (Human), this protein is N-alpha-acetyltransferase 16, NatA auxiliary subunit (NAA16).